A 272-amino-acid chain; its full sequence is Glucosyl-3-phosphoglycerate/mannosyl-3-phosphoglycerate phosphatase (272 aa).

Catalysis depends on aspartate 8, which acts as the Nucleophile. Mg(2+)-binding residues include aspartate 8, aspartate 10, and aspartate 214.

Belongs to the HAD-like hydrolase superfamily. MPGP family. As to quaternary structure, monomer. It depends on Co(2+) as a cofactor. Mg(2+) serves as cofactor. The cofactor is Ni(2+).

It catalyses the reaction (2R)-2-O-(alpha-D-glucopyranosyl)-3-phospho-glycerate + H2O = (2R)-2-O-(alpha-D-glucopyranosyl)-glycerate + phosphate. The enzyme catalyses 2-O-(alpha-D-mannosyl)-3-phosphoglycerate + H2O = (2R)-2-O-(alpha-D-mannosyl)-glycerate + phosphate. In terms of biological role, involved in the biosynthesis of glucosylglycerate. Catalyzes the dephosphorylation of glucosyl-3-phosphoglycerate (GPG) and mannosyl-3-phosphoglycerate (MPG) to glucosylglycerate (GG) and mannosylglycerate (MG), respectively. In Methanococcoides burtonii (strain DSM 6242 / NBRC 107633 / OCM 468 / ACE-M), this protein is Glucosyl-3-phosphoglycerate/mannosyl-3-phosphoglycerate phosphatase.